The primary structure comprises 113 residues: UPF0342 protein spyM18_0873 (113 aa).

The protein belongs to the UPF0342 family.

This chain is UPF0342 protein spyM18_0873, found in Streptococcus pyogenes serotype M18 (strain MGAS8232).